A 387-amino-acid polypeptide reads, in one-letter code: Probable purine permease 6 (387 aa).

A disordered region spans residues 1-24 (MMELESETQELHLHVNGEPEGKFS). The segment covering 9–24 (QELHLHVNGEPEGKFS) has biased composition (basic and acidic residues). 10 helical membrane passes run 36 to 56 (LRVS…TLLG), 68 to 88 (WLET…YYYL), 106 to 126 (FLTL…HCIL), 129 to 149 (FGLL…QLAF), 162 to 182 (ITPF…LLVI), 201 to 221 (YVIG…VLSL), 238 to 258 (ILDM…VGLF), 283 to 303 (INIG…GLII), 309 to 329 (FSNV…VVFF), and 333 to 353 (MSGI…SYGY). A disordered region spans residues 362-387 (PEEDQELPQSKEEEEQKQVDTIHVQA). Residues 370–381 (QSKEEEEQKQVD) show a composition bias toward basic and acidic residues.

This sequence belongs to the purine permeases (TC 2.A.7.14) family.

It is found in the membrane. The polypeptide is Probable purine permease 6 (PUP6) (Arabidopsis thaliana (Mouse-ear cress)).